The chain runs to 478 residues: Succinyl-CoA:acetate/propanoyl-CoA:succinate CoA transferase (478 aa).

The N-terminal 30 residues, 1-30 (MYQLAFLRCRYASPIVREARRAFHASRKCQ), are a transit peptide targeting the mitochondrion. 256 to 260 (GIGAI) is a binding site for CoA. E279 acts as the 5-glutamyl coenzyme A thioester intermediate in catalysis. The CoA site is built by I354, G377, and K404.

Belongs to the acetyl-CoA hydrolase/transferase family.

It localises to the mitochondrion. It carries out the reaction succinyl-CoA + acetate = succinate + acetyl-CoA. The enzyme catalyses propanoyl-CoA + succinate = propanoate + succinyl-CoA. Functionally, transferase involved in anaerobic fumarate-respiration in the mitochondria. Catalyzes the transfer of the CoA moiety of acetyl-CoA or propionyl-CoA to succinate, thereby forming acetate and propionate, respectively. Acetate and propionate are the two major metabolic end products in the anaerobic mitochondrial metabolism of F.hepatica. Also displays CoA transferase activities from acetyl-CoA to propionate, acetate and butyrate. The polypeptide is Succinyl-CoA:acetate/propanoyl-CoA:succinate CoA transferase (Fasciola hepatica (Liver fluke)).